The chain runs to 624 residues: DNA mismatch repair protein MutL (624 aa).

Residues 360 to 396 are disordered; the sequence is GGNHFSQPAPRRETASTEPAVARERAPQPAYHSGSGY. The segment covering 369-385 has biased composition (basic and acidic residues); the sequence is PRRETASTEPAVARERA.

Belongs to the DNA mismatch repair MutL/HexB family.

Functionally, this protein is involved in the repair of mismatches in DNA. It is required for dam-dependent methyl-directed DNA mismatch repair. May act as a 'molecular matchmaker', a protein that promotes the formation of a stable complex between two or more DNA-binding proteins in an ATP-dependent manner without itself being part of a final effector complex. The sequence is that of DNA mismatch repair protein MutL from Serratia proteamaculans (strain 568).